Here is a 602-residue protein sequence, read N- to C-terminus: Elongation factor 4 (602 aa).

Residues 7–188 form the tr-type G domain; the sequence is ENIRNFSIIA…AIIELIPPPK (182 aa). GTP contacts are provided by residues 19–24 and 135–138; these read DHGKST and NKID.

The protein belongs to the TRAFAC class translation factor GTPase superfamily. Classic translation factor GTPase family. LepA subfamily.

The protein resides in the cell inner membrane. It catalyses the reaction GTP + H2O = GDP + phosphate + H(+). Its function is as follows. Required for accurate and efficient protein synthesis under certain stress conditions. May act as a fidelity factor of the translation reaction, by catalyzing a one-codon backward translocation of tRNAs on improperly translocated ribosomes. Back-translocation proceeds from a post-translocation (POST) complex to a pre-translocation (PRE) complex, thus giving elongation factor G a second chance to translocate the tRNAs correctly. Binds to ribosomes in a GTP-dependent manner. This is Elongation factor 4 from Chlamydia caviae (strain ATCC VR-813 / DSM 19441 / 03DC25 / GPIC) (Chlamydophila caviae).